The following is a 381-amino-acid chain: uncharacterized protein (381 aa).

A run of 2 helical transmembrane segments spans residues 22–42 (GVLL…YLTA) and 246–266 (LIPE…LLVA).

Its subcellular location is the cell membrane. This is an uncharacterized protein from Mycobacterium tuberculosis (strain ATCC 25618 / H37Rv).